A 331-amino-acid chain; its full sequence is Anthranilate phosphoribosyltransferase (331 aa).

Residues Gly79, 82–83 (GD), Thr87, 89–92 (NIST), 107–115 (KHGNYGATS), and Ala119 contribute to the 5-phospho-alpha-D-ribose 1-diphosphate site. Gly79 contacts anthranilate. A Mg(2+)-binding site is contributed by Ser91. Residue Asn110 coordinates anthranilate. Arg165 contacts anthranilate. Mg(2+) contacts are provided by Asp223 and Glu224.

This sequence belongs to the anthranilate phosphoribosyltransferase family. Homodimer. Mg(2+) is required as a cofactor.

The catalysed reaction is N-(5-phospho-beta-D-ribosyl)anthranilate + diphosphate = 5-phospho-alpha-D-ribose 1-diphosphate + anthranilate. The protein operates within amino-acid biosynthesis; L-tryptophan biosynthesis; L-tryptophan from chorismate: step 2/5. Functionally, catalyzes the transfer of the phosphoribosyl group of 5-phosphorylribose-1-pyrophosphate (PRPP) to anthranilate to yield N-(5'-phosphoribosyl)-anthranilate (PRA). The protein is Anthranilate phosphoribosyltransferase of Bacteroides fragilis (strain YCH46).